The primary structure comprises 162 residues: Caveolin-2 (162 aa).

The Cytoplasmic segment spans residues 1 to 86; the sequence is MGLETEKADV…FEVSKYVIYK (86 aa). Residue Y19 is modified to Phosphotyrosine; by SRC. Residues S20, S23, and S36 each carry the phosphoserine modification. The helical intramembrane region spans 87 to 107; the sequence is FLTLLLAMPMAFAAGVLFATL. Residues 108–162 are Cytoplasmic-facing; that stretch reads SCLHIWIIMPFVKTCLMVLPSVQTIWKSVTDAVIAPLCSSVGRSFSSVSLQVSHD.

The protein belongs to the caveolin family. Monomer or homodimer. Interacts with CAV1; the interaction forms a stable heterooligomeric complex that is required for targeting to lipid rafts and for caveolae formation. Tyrosine phosphorylated forms do not form heterooligomers with the Tyr-19-phosphorylated form existing as a monomer or dimer. Interacts (tyrosine phosphorylated form) with the SH2 domain-containing proteins, RASA1, NCK1 and SRC. Interacts (tyrosine phosphorylated form) with INSR. Interacts (Tyr-19 phosphorylated form) with MAPK1 (phosphorylated form); the interaction, promoted by insulin, leads to nuclear location and MAPK1 activation. Interacts with STAT3; the interaction is increased on insulin-induced tyrosine phosphorylation leading to STAT activation. In terms of processing, phosphorylated on serine and tyrosine residues. CAV1 promotes phosphorylation on Ser-23 which then targets the complex to the plasma membrane, lipid rafts and caveolae. Phosphorylation on Ser-36 appears to modulate mitosis in endothelial cells. Phosphorylation on Tyr-19 is required for insulin-induced phosphorylation of MAPK1 and DNA binding of STAT3. Tyrosine phosphorylation is induced by both EGF and insulin.

It is found in the nucleus. The protein resides in the cytoplasm. Its subcellular location is the golgi apparatus membrane. The protein localises to the cell membrane. It localises to the membrane. It is found in the caveola. May act as a scaffolding protein within caveolar membranes. Interacts directly with G-protein alpha subunits and can functionally regulate their activity. Acts as an accessory protein in conjunction with CAV1 in targeting to lipid rafts and driving caveolae formation. The Ser-36 phosphorylated form has a role in modulating mitosis in endothelial cells. Positive regulator of cellular mitogenesis of the MAPK signaling pathway. Required for the insulin-stimulated nuclear translocation and activation of MAPK1 and STAT3, and the subsequent regulation of cell cycle progression. The chain is Caveolin-2 (CAV2) from Canis lupus familiaris (Dog).